We begin with the raw amino-acid sequence, 237 residues long: Phosphoribosylaminoimidazole-succinocarboxamide synthase (237 aa).

Belongs to the SAICAR synthetase family.

The enzyme catalyses 5-amino-1-(5-phospho-D-ribosyl)imidazole-4-carboxylate + L-aspartate + ATP = (2S)-2-[5-amino-1-(5-phospho-beta-D-ribosyl)imidazole-4-carboxamido]succinate + ADP + phosphate + 2 H(+). Its pathway is purine metabolism; IMP biosynthesis via de novo pathway; 5-amino-1-(5-phospho-D-ribosyl)imidazole-4-carboxamide from 5-amino-1-(5-phospho-D-ribosyl)imidazole-4-carboxylate: step 1/2. This is Phosphoribosylaminoimidazole-succinocarboxamide synthase from Pectobacterium atrosepticum (strain SCRI 1043 / ATCC BAA-672) (Erwinia carotovora subsp. atroseptica).